The chain runs to 664 residues: Translation factor guf1, mitochondrial (664 aa).

A mitochondrion-targeting transit peptide spans 1–43 (MRGCLQLARWLSAAPKGTAASLTRAPFGLANATRFFTNSAARA). A tr-type G domain is found at 66-246 (ERYRNFCIVA…TVVDKIPAPI (181 aa)). Residues 75 to 82 (AHVDHGKS), 139 to 143 (DTPGH), and 193 to 196 (NKVD) contribute to the GTP site.

The protein belongs to the TRAFAC class translation factor GTPase superfamily. Classic translation factor GTPase family. LepA subfamily.

It is found in the mitochondrion inner membrane. It catalyses the reaction GTP + H2O = GDP + phosphate + H(+). Promotes mitochondrial protein synthesis. May act as a fidelity factor of the translation reaction, by catalyzing a one-codon backward translocation of tRNAs on improperly translocated ribosomes. Binds to mitochondrial ribosomes in a GTP-dependent manner. In Aspergillus clavatus (strain ATCC 1007 / CBS 513.65 / DSM 816 / NCTC 3887 / NRRL 1 / QM 1276 / 107), this protein is Translation factor guf1, mitochondrial (guf1).